The following is a 519-amino-acid chain: Methionine--tRNA ligase (519 aa).

Positions 11 to 21 (AYPNAAPHVGH) match the 'HIGH' region motif. The short motif at 299 to 303 (KMSKS) is the 'KMSKS' region element. K302 provides a ligand contact to ATP. The segment at 500–519 (LPPPTGVFPRYQPPQPPEGK) is disordered.

The protein belongs to the class-I aminoacyl-tRNA synthetase family. MetG type 2B subfamily. Monomer.

The protein resides in the cytoplasm. The enzyme catalyses tRNA(Met) + L-methionine + ATP = L-methionyl-tRNA(Met) + AMP + diphosphate. Is required not only for elongation of protein synthesis but also for the initiation of all mRNA translation through initiator tRNA(fMet) aminoacylation. This Mycobacterium tuberculosis (strain ATCC 25618 / H37Rv) protein is Methionine--tRNA ligase.